We begin with the raw amino-acid sequence, 367 residues long: Selenoprotein Pa (367 aa).

The first 19 residues, 1–19, serve as a signal peptide directing secretion; sequence MWKALSLTLALCLLVGCSA. A non-standard amino acid (selenocysteine) is located at residue selenocysteine 59. An N-linked (GlcNAc...) asparagine glycan is attached at asparagine 109. Residues 191–220 are compositionally biased toward basic and acidic residues; the sequence is EVNKPVEEEPRQDHGHHEHGHHEHQGEAER. A disordered region spans residues 191-241; it reads EVNKPVEEEPRQDHGHHEHGHHEHQGEAERHRHGHHHPHHHHHHHRGQQQV. A compositionally biased stretch (basic residues) spans 221-237; sequence HRHGHHHPHHHHHHHRG. Residues selenocysteine 267, selenocysteine 273, selenocysteine 279, selenocysteine 290, selenocysteine 292, selenocysteine 294, selenocysteine 310, selenocysteine 320, selenocysteine 322, selenocysteine 336, selenocysteine 338, selenocysteine 346, selenocysteine 353, selenocysteine 355, selenocysteine 362, and selenocysteine 364 are each a non-standard amino acid (selenocysteine). The segment at 309–367 is disordered; the sequence is LUHCDEPLPASUPUQGLKEQDNHIKETUQURPAPPAEUELSQPTUVUPAGDATUGURKK. The segment covering 326 to 336 has biased composition (basic and acidic residues); that stretch reads KEQDNHIKETU.

The protein belongs to the selenoprotein P family.

It is found in the secreted. Its function is as follows. Might be responsible for some of the extracellular antioxidant defense properties of selenium or might be involved in the transport of selenium. The chain is Selenoprotein Pa (sepp1a) from Danio rerio (Zebrafish).